Here is a 181-residue protein sequence, read N- to C-terminus: Ribulose bisphosphate carboxylase small subunit, chloroplastic (181 aa).

The N-terminal 56 residues, 1–56 (MASISSSAIATVNRTTSTQASLAAPFTGLKSNVAFPVTKKANNDFSSLPSNGGRVQ), are a transit peptide targeting the chloroplast.

The protein belongs to the RuBisCO small chain family. Heterohexadecamer of 8 large and 8 small subunits.

The protein resides in the plastid. It localises to the chloroplast. Functionally, ruBisCO catalyzes two reactions: the carboxylation of D-ribulose 1,5-bisphosphate, the primary event in carbon dioxide fixation, as well as the oxidative fragmentation of the pentose substrate. Both reactions occur simultaneously and in competition at the same active site. Although the small subunit is not catalytic it is essential for maximal activity. The polypeptide is Ribulose bisphosphate carboxylase small subunit, chloroplastic (Lactuca sativa (Garden lettuce)).